Reading from the N-terminus, the 385-residue chain is MNDLRSYDLYTSLVSHSDSITSASNTLTEGTAIALSTALLHPLDSILTRLQVRYASQHHNKKKDNRTRTRKPLDVLGDIVDLAAENVKDAEGRAVLYAGLREAICKQTAENMLVPAVYAALHARRLNLGRTAGNELLLSLVSMAFVKLFTEPLGTIMVRRQVTGSGTRCVVDDILRQKGVGGLWSAYGATLVLCVRSCVLPVVYLALRRRLGMKRGGLLGMLVLRAIAESVVYRLAVMQVCARAGVKAVGNGSKLGSTYTNDYTICVLMVCLGLLLEVIRTLSSQGVTTVTSDVVTVAMMRLSAVMLYMLEPFLLSEQAITDSVRENVDAGASQPLLDDAKYMNNAVKRAISIVNRGIGLASHGRDDVAVAELVGDYVEDGPEDG.

Solcar repeat units lie at residues 24–124 (SNTL…LHAR) and 130–210 (RTAG…LRRR). The next 5 helical transmembrane spans lie at 30-47 (GTAI…DSIL), 132-150 (AGNE…KLFT), 184-207 (WSAY…YLAL), 263-279 (YTIC…LEVI), and 294-310 (VVTV…LYML).

This sequence belongs to the mitochondrial carrier (TC 2.A.29) family.

Its subcellular location is the mitochondrion inner membrane. May function as a mitochondrial transporter. The sequence is that of Putative mitochondrial carrier protein TRV_02148.2 from Trichophyton verrucosum (strain HKI 0517).